We begin with the raw amino-acid sequence, 237 residues long: MRPSGRKLDQMRSVSIEPNVMKHAEGSCLIRMGETHVLCSASIEDKPPPFLKNTGLGWVTAEYGMLPRATTSRNRREAAAGKQSGRTQEIQRLIGRALRAGVDRSALGERQIVIDCDVLQADGGTRCASITGGWVALRLAVNKLLKAGIIVSDPIVDNVAAVSCGIYAGQPVLDLDYAEDSTAGTDGNFVLTGRSRMIEVQMSAEGASFSRDEMGQLLDLAEAGIAELVAAQKAALG.

Phosphate contacts are provided by residues Arg86 and 124-126 (GTR).

This sequence belongs to the RNase PH family. As to quaternary structure, homohexameric ring arranged as a trimer of dimers.

It catalyses the reaction tRNA(n+1) + phosphate = tRNA(n) + a ribonucleoside 5'-diphosphate. In terms of biological role, phosphorolytic 3'-5' exoribonuclease that plays an important role in tRNA 3'-end maturation. Removes nucleotide residues following the 3'-CCA terminus of tRNAs; can also add nucleotides to the ends of RNA molecules by using nucleoside diphosphates as substrates, but this may not be physiologically important. Probably plays a role in initiation of 16S rRNA degradation (leading to ribosome degradation) during starvation. In Cereibacter sphaeroides (strain KD131 / KCTC 12085) (Rhodobacter sphaeroides), this protein is Ribonuclease PH.